Here is a 749-residue protein sequence, read N- to C-terminus: MGRAGAAAVIPGLALLWAVGLGSAAPSPPRLRLSFQELQAWHGLQTFSLERTCCYQALLVDEERGRLFVGAENHVASLNLDNISKRAKKLAWPAPVEWREECNWAGKDIGTECMNFVKLLHAYNRTHLLACGTGAFHPTCAFVEVGHRAEEPVLRLDPGRIEDGKGKSPYDPRHRAASVLVGEELYSGVAADLMGRDFTIFRSLGQRPSLRTEPHDSRWLNEPKFVKVFWIPESENPDDDKIYFFFRETAVEAAPALGRLSVSRVGQICRNDVGGQRSLVNKWTTFLKARLVCSVPGVEGDTHFDQLQDVFLLSSRDHRTPLLYAVFSTSSSIFQGSAVCVYSMNDVRRAFLGPFAHKEGPMHQWVSYQGRVPYPRPGMCPSKTFGTFSSTKDFPDDVIQFARNHPLMYNSVLPTGGRPLFLQVGANYTFTQIAADRVAAADGHYDVLFIGTDVGTVLKVISVPKGSRPSAEGLLLEELHVFEDSAAVTSMQISSKRHQLYVASRSAVAQIALHRCAAHGRVCTECCLARDPYCAWDGVACTRFQPSAKRRFRRQDVRNGDPSTLCSGDSSRPALLEHKVFGVEGSSAFLECEPRSLQARVEWTFQRAGVTAHTQVLAEERTERTARGLLLRRLRRRDSGVYLCAAVEQGFTQPLRRLSLHVLSATQAERLARAEEAAPAAPPGPKLWYRDFLQLVEPGGGGSANSLRMCRPQPALQSLPLESRRKGRNRRTHAPEPRAERGPRSATHW.

An N-terminal signal peptide occupies residues 1-24 (MGRAGAAAVIPGLALLWAVGLGSA). Residues 30–513 (RLRLSFQELQ…SRSAVAQIAL (484 aa)) enclose the Sema domain. Asparagine 82 is a glycosylation site (N-linked (GlcNAc...) asparagine). A disulfide bridge links cysteine 102 with cysteine 113. Residue asparagine 124 is glycosylated (N-linked (GlcNAc...) asparagine). Intrachain disulfides connect cysteine 131-cysteine 140, cysteine 269-cysteine 380, and cysteine 293-cysteine 340. The N-linked (GlcNAc...) asparagine glycan is linked to asparagine 427. 2 disulfide bridges follow: cysteine 516/cysteine 534 and cysteine 644/cysteine 710. The Ig-like C2-type domain maps to 573–659 (PALLEHKVFG…GFTQPLRRLS (87 aa)). Residues 702–749 (GSANSLRMCRPQPALQSLPLESRRKGRNRRTHAPEPRAERGPRSATHW) form a disordered region. Over residues 733–743 (HAPEPRAERGP) the composition is skewed to basic and acidic residues.

Belongs to the semaphorin family. As to expression, expressed abundantly but differentially in a variety of neural and nonneural tissues.

It is found in the secreted. The protein resides in the endoplasmic reticulum. Its function is as follows. Inhibits axonal extension by providing local signals to specify territories inaccessible for growing axons. The sequence is that of Semaphorin-3B (SEMA3B) from Homo sapiens (Human).